The primary structure comprises 669 residues: DNA ligase (669 aa).

35 to 39 contributes to the NAD(+) binding site; the sequence is DFEYD. The tract at residues 52 to 71 is disordered; that stretch reads YPEWDSPDSPTHRVGSDKTE. Positions 61-71 are enriched in basic and acidic residues; it reads PTHRVGSDKTE. NAD(+) contacts are provided by residues 84–85 and Glu-115; that span reads SL. The active-site N6-AMP-lysine intermediate is the Lys-117. Residues Arg-138, Glu-175, Lys-290, and Lys-314 each coordinate NAD(+). Zn(2+) is bound by residues Cys-408, Cys-411, Cys-426, and Cys-432. A BRCT domain is found at 590-669; the sequence is AVSNRLAGKT…EEEFLRLIEE (80 aa).

The protein belongs to the NAD-dependent DNA ligase family. LigA subfamily. Mg(2+) serves as cofactor. The cofactor is Mn(2+).

It carries out the reaction NAD(+) + (deoxyribonucleotide)n-3'-hydroxyl + 5'-phospho-(deoxyribonucleotide)m = (deoxyribonucleotide)n+m + AMP + beta-nicotinamide D-nucleotide.. In terms of biological role, DNA ligase that catalyzes the formation of phosphodiester linkages between 5'-phosphoryl and 3'-hydroxyl groups in double-stranded DNA using NAD as a coenzyme and as the energy source for the reaction. It is essential for DNA replication and repair of damaged DNA. The chain is DNA ligase from Porphyromonas gingivalis (strain ATCC BAA-308 / W83).